Reading from the N-terminus, the 374-residue chain is S-adenosylmethionine:tRNA ribosyltransferase-isomerase (374 aa).

The protein belongs to the QueA family. Monomer.

The protein localises to the cytoplasm. The enzyme catalyses 7-aminomethyl-7-carbaguanosine(34) in tRNA + S-adenosyl-L-methionine = epoxyqueuosine(34) in tRNA + adenine + L-methionine + 2 H(+). The protein operates within tRNA modification; tRNA-queuosine biosynthesis. In terms of biological role, transfers and isomerizes the ribose moiety from AdoMet to the 7-aminomethyl group of 7-deazaguanine (preQ1-tRNA) to give epoxyqueuosine (oQ-tRNA). This Prochlorococcus marinus (strain AS9601) protein is S-adenosylmethionine:tRNA ribosyltransferase-isomerase.